An 85-amino-acid chain; its full sequence is Sec-independent protein translocase protein TatA (85 aa).

The chain crosses the membrane as a helical span at residues Met-1–Gly-21. The tract at residues Phe-39–His-85 is disordered.

The protein belongs to the TatA/E family. In terms of assembly, the Tat system comprises two distinct complexes: a TatABC complex, containing multiple copies of TatA, TatB and TatC subunits, and a separate TatA complex, containing only TatA subunits. Substrates initially bind to the TatABC complex, which probably triggers association of the separate TatA complex to form the active translocon.

It localises to the cell inner membrane. Part of the twin-arginine translocation (Tat) system that transports large folded proteins containing a characteristic twin-arginine motif in their signal peptide across membranes. TatA could form the protein-conducting channel of the Tat system. In Rhizorhabdus wittichii (strain DSM 6014 / CCUG 31198 / JCM 15750 / NBRC 105917 / EY 4224 / RW1) (Sphingomonas wittichii), this protein is Sec-independent protein translocase protein TatA.